Consider the following 314-residue polypeptide: MNKDTTMYCSAYIRDVFFCEIGVGISANSCLLLFHIFMFIRGHRPRLTDLPIGLMALIHLLMLLLAAYIAKDFFMSSGWDDITCKLFIFLHRFFRSLSVCATCMLSVFQTIILCPQSSHLAKFKPNSPYHLSCFFIFMSIFYTSISSHILIAAIATQNLTSVNLIYITKSCSFLPMSSSMQRTFSTLLAFRNAFLIGLMGLSTCYMATLLCRHKTRSQRLQNSKLSPKATPEQRAIWTLLMFMSFFLVMSTFDSIISYSRTIFQGNPSLYCAQILVAHSYAVVSPMLVLSNENRLTNPLISMYERIVRLDFLCW.

Residues Met1–Cys19 lie on the Extracellular side of the membrane. The helical transmembrane segment at Glu20–Ile40 threads the bilayer. The Cytoplasmic portion of the chain corresponds to Arg41–Asp49. The helical transmembrane segment at Leu50–Ala70 threads the bilayer. Over Lys71–Arg92 the chain is Extracellular. Cys84 and Cys171 are disulfide-bonded. Residues Phe93–Leu113 traverse the membrane as a helical segment. Topologically, residues Cys114 to Cys133 are cytoplasmic. Residues Phe134–Ile154 traverse the membrane as a helical segment. Topologically, residues Ala155–Thr186 are extracellular. Asn158 carries N-linked (GlcNAc...) asparagine glycosylation. A helical membrane pass occupies residues Leu187–Ala207. The Cytoplasmic segment spans residues Thr208–Ala235. A helical membrane pass occupies residues Ile236 to Ile256. Residues Ser257–Ser268 are Extracellular-facing. The helical transmembrane segment at Leu269–Leu289 threads the bilayer. Residues Ser290 to Trp314 are Cytoplasmic-facing.

It belongs to the G-protein coupled receptor 1 family.

It localises to the cell membrane. Its function is as follows. Putative pheromone receptor implicated in the regulation of social as well as reproductive behavior. In Rattus norvegicus (Rat), this protein is Vomeronasal type-1 receptor 98 (Vom1r98).